The following is a 113-amino-acid chain: Prefoldin subunit beta (113 aa).

The protein belongs to the prefoldin subunit beta family. Heterohexamer of two alpha and four beta subunits.

The protein localises to the cytoplasm. Functionally, molecular chaperone capable of stabilizing a range of proteins. Seems to fulfill an ATP-independent, HSP70-like function in archaeal de novo protein folding. The protein is Prefoldin subunit beta of Methanococcus maripaludis (strain C7 / ATCC BAA-1331).